The sequence spans 585 residues: A-type ATP synthase subunit A (585 aa).

237–244 is an ATP binding site; sequence GPFGSGKT.

This sequence belongs to the ATPase alpha/beta chains family. Has multiple subunits with at least A(3), B(3), C, D, E, F, H, I and proteolipid K(x).

The protein localises to the cell membrane. It catalyses the reaction ATP + H2O + 4 H(+)(in) = ADP + phosphate + 5 H(+)(out). Functionally, component of the A-type ATP synthase that produces ATP from ADP in the presence of a proton gradient across the membrane. The A chain is the catalytic subunit. This Natronomonas pharaonis (strain ATCC 35678 / DSM 2160 / CIP 103997 / JCM 8858 / NBRC 14720 / NCIMB 2260 / Gabara) (Halobacterium pharaonis) protein is A-type ATP synthase subunit A.